The primary structure comprises 461 residues: Argininosuccinate lyase (461 aa).

It belongs to the lyase 1 family. Argininosuccinate lyase subfamily.

The protein resides in the cytoplasm. It carries out the reaction 2-(N(omega)-L-arginino)succinate = fumarate + L-arginine. Its pathway is amino-acid biosynthesis; L-arginine biosynthesis; L-arginine from L-ornithine and carbamoyl phosphate: step 3/3. Its activity is regulated as follows. Strongly inhibited by L-arginine. Inhibitory effects are lowered at pH 7.0 compared to those at pH 8.0. At 45 degrees Celsius and pH 8.0, activity decreases to 94%, 74% and 37% in the presence of 0.6 mM, 2.8 mM and 10 mM arginine, respectively. Activity also decreases to 86% in the presence of 10 mM sodium succinate or sodium citrate. Activity does not decrease in the presence of 1 mM or 10 mM L-lysine, which has a similar structure to arginine. In terms of biological role, catalyzes the last step of arginine biosynthesis, the conversion of argininosuccinate into L-arginine and fumarate. This is Argininosuccinate lyase from Synechocystis sp. (strain ATCC 27184 / PCC 6803 / Kazusa).